We begin with the raw amino-acid sequence, 224 residues long: Response regulator protein GraR (224 aa).

Residues 2–115 (QILLVEDDNT…VLIAKLQAIY (114 aa)) enclose the Response regulatory domain. Aspartate 51 carries the post-translational modification 4-aspartylphosphate. Positions 126–224 (KRTLTWQDAV…KVGKGYMAHE (99 aa)) form a DNA-binding region, ompR/PhoB-type. Phosphothreonine occurs at positions 128, 130, and 149.

In terms of assembly, interacts with GraX. Post-translationally, phosphorylated by GraS. Phosphorylated by Stk1; phosphorylation increases the DNA-binding activity of GraR.

It is found in the cytoplasm. In terms of biological role, member of the two-component regulatory system GraR/GraS involved in resistance against cationic antimicrobial peptides (CAMPs). Upon phosphorylation by GraS, functions as a transcription regulator by direct binding to promoter regions of target genes such as adhesins, exoproteins, transporters, toxins, and proteins involved in cell wall synthesis. Down-regulates the expression of many genes involved in RNA and amino acid synthesis or glycolysis. The chain is Response regulator protein GraR (graR) from Staphylococcus aureus (strain MRSA252).